Here is a 322-residue protein sequence, read N- to C-terminus: MDSIHGHYHIQLSNYSAGENLQSATPPEGVIGAHRVKVETALSHSNRQKKLSATIKHNQSSRSMLDRKLTSDGKVNQRSSFTFSMIMYRMIHFVLSTRVPAVRESVANYGGNINFKFAQTKGAFLHQIIKHSDTARGACEALCAHWIRSHAQGQSLFDQLYVGGRKGKFQIDTLYSIKQLQIDGCKADVDQDEVTLDWLKKNGISERMIERHCLLPTVDVTGTTGSEGPDQLLNAILDTNGIGYGYKKISLSGQMSGHTIAAYVNENSGVTFFDPNFGEFHFSDKEKFSKWFTNSFWENSMYHYPLGVGQSFSVFTFDSKEV.

The interval 42–69 is disordered; sequence LSHSNRQKKLSATIKHNQSSRSMLDRKL. Residues Cys139, His258, and Asp274 contribute to the active site.

This sequence belongs to the peptidase C58 family. As to quaternary structure, interacts with human ARHA.

It is found in the secreted. Cysteine protease, which is translocated into infected cells and plays a central role in pathogenesis by cleaving the C-terminus end of the human small GTPase RhoA/ARHA, a regulator of cytoskeleton. Once cleaved, ARHA loses its lipid modification, and is released from the cell membrane, leading to the subsequent disruption of actin cytoskeleton of the host cell. The protein is Cysteine protease yopT1 (yopT1) of Yersinia enterocolitica serotype O:8 / biotype 1B (strain NCTC 13174 / 8081).